Reading from the N-terminus, the 285-residue chain is Mitochondrial substrate carrier family protein L (285 aa).

Topologically, residues 1–13 (MIASKETKEKIRN) are mitochondrial intermembrane. 3 Solcar repeats span residues 8–94 (KEKI…VKSK), 103–185 (ISLG…AQRY), and 193–282 (MTMG…VMKF). A helical transmembrane segment spans residues 14 to 34 (FIGGFASGAASTLAGHPFDTL). The Mitochondrial matrix segment spans residues 35 to 69 (KVRLQTEGSTGRFRGLAHCFTTTIKEEGFFALYKG). A helical membrane pass occupies residues 70–90 (VTPPLLGMSIINSCMFGAMNI). Topologically, residues 91-102 (VKSKIHTDKSTP) are mitochondrial intermembrane. The helical transmembrane segment at 103–123 (ISLGEIMVSGAITGWIVSFVA) threads the bilayer. The Mitochondrial matrix segment spans residues 124-156 (CPIETVKSKLQVQYTGVKLYNGPIDCIKKIGIR). A helical transmembrane segment spans residues 157–177 (GLYKALIPTGFQRNSLYAYFG). At 178 to 198 (CYELAQRYLRREDGSMTMGRS) the chain is on the mitochondrial intermembrane side. Residues 199-219 (FIAGGIAGTGFWLTNFPFDVI) form a helical membrane-spanning segment. The Mitochondrial matrix portion of the chain corresponds to 220–256 (RSRIMTMPYNESPPRYKGMIDCAKHIYRVDGLKGFWK). The chain crosses the membrane as a helical span at residues 257 to 277 (GFSPCLLRTFPANGATFVAYE). The Mitochondrial intermembrane segment spans residues 278-285 (CVMKFFPM).

It belongs to the mitochondrial carrier (TC 2.A.29) family.

It localises to the mitochondrion inner membrane. In terms of biological role, mitochondrial solute carriers shuttle metabolites, nucleotides, and cofactors through the mitochondrial inner membrane. This Dictyostelium discoideum (Social amoeba) protein is Mitochondrial substrate carrier family protein L (mcfL).